The chain runs to 4963 residues: Kettin homolog (4963 aa).

Ig-like domains are found at residues proline 18 to leucine 105, proline 133 to serine 220, and proline 303 to glutamate 392. Disordered regions lie at residues leucine 396 to glutamine 420, arginine 466 to arginine 501, isoleucine 557 to valine 578, glutamine 598 to phenylalanine 622, and threonine 652 to histidine 696. 3 stretches are compositionally biased toward basic and acidic residues: residues proline 399–glutamine 417, arginine 466–leucine 475, and phenylalanine 484–arginine 501. The stretch at glutamate 401–glutamine 517 forms a coiled coil. A compositionally biased stretch (low complexity) spans isoleucine 557–glutamine 576. A compositionally biased stretch (low complexity) spans alanine 658–glycine 685. Ig-like domains lie at proline 706–asparagine 796, proline 806–valine 893, proline 937–alanine 1027, proline 1065–isoleucine 1155, phenylalanine 1199–threonine 1281, proline 1462–threonine 1554, proline 1594–arginine 1687, proline 1728–asparagine 1819, proline 1992–glutamate 2085, proline 2126–lysine 2217, proline 2258–threonine 2350, proline 2391–threonine 2481, proline 2522–serine 2613, proline 2654–glycine 2745, proline 2787–threonine 2878, proline 2919–arginine 3010, proline 3051–lysine 3141, proline 3182–glutamate 3273, proline 3314–serine 3407, and proline 3448–threonine 3539. Cysteine 827 and cysteine 877 form a disulfide bridge. Cysteine 1201 and cysteine 1265 are disulfide-bonded. Cysteines 1618 and 1671 form a disulfide. Disulfide bonds link cysteine 2016–cysteine 2069 and cysteine 2148–cysteine 2201. Residues glutamate 3567–proline 3583 show a composition bias toward basic and acidic residues. The segment at glutamate 3567 to leucine 3590 is disordered. 5 consecutive Ig-like domains span residues proline 3584 to valine 3677, proline 3720 to alanine 3811, proline 3821 to threonine 3913, proline 3962 to alanine 4052, and proline 4098 to aspartate 4185. 2 disulfides stabilise this stretch: cysteine 3606/cysteine 3659 and cysteine 3742/cysteine 3795. Residues arginine 4193–arginine 4963 are required for F-actin binding. Over residues aspartate 4319–aspartate 4329 the composition is skewed to basic and acidic residues. The tract at residues aspartate 4319 to leucine 4357 is disordered. 4 Ig-like domains span residues proline 4546–threonine 4634, proline 4645–asparagine 4733, proline 4752–threonine 4842, and proline 4872–threonine 4960.

Interacts (via Ig-like domains) with F-actin. Expressed in the pharyngeal, body wall, and anal depressor muscles. Expression in these muscles is higher in hermaphrodites than in males. Expressed in the vulva and the myoepithelial sheath of the proximal ovary. Expressed in the proximal gonad of males. Not expressed in the dense bodies of the obliquely striated body wall muscle.

It is found in the cytoplasm. It localises to the myofibril. The protein localises to the sarcomere. The protein resides in the cytoskeleton. In terms of biological role, positively regulates actin filament organization and provides mechanical stability to the myofibrils during body wall muscle contraction. Required for the organization of sarcomeric actin filaments and myosin protein myo-3 in striated body wall muscle cells. Not required for assembly of dense bodies, which are a type of integrin-based adhesion structure that link the plasma membrane to thin filaments of myofibrils, in body wall muscle. Not required for the atn-1 protein to localize to the dense bodies. The protein is Kettin homolog of Caenorhabditis elegans.